Reading from the N-terminus, the 241-residue chain is Uridylate kinase (241 aa).

15–18 (KMSG) contributes to the ATP binding site. Positions 23–28 (GAEGFG) are involved in allosteric activation by GTP. UMP is bound at residue G57. Positions 58 and 62 each coordinate ATP. UMP-binding positions include D77 and 138–145 (TGNPLFTT). Positions 165, 171, and 174 each coordinate ATP.

The protein belongs to the UMP kinase family. As to quaternary structure, homohexamer.

It localises to the cytoplasm. The enzyme catalyses UMP + ATP = UDP + ADP. It participates in pyrimidine metabolism; CTP biosynthesis via de novo pathway; UDP from UMP (UMPK route): step 1/1. Allosterically activated by GTP. Inhibited by UTP. In terms of biological role, catalyzes the reversible phosphorylation of UMP to UDP. The polypeptide is Uridylate kinase (Blochmanniella pennsylvanica (strain BPEN)).